A 314-amino-acid polypeptide reads, in one-letter code: uncharacterized protein (314 aa).

Residues 1–20 form the signal peptide; the sequence is MKKRAGIWAALLLAAVMLAG. Cysteine 21 is lipidated: N-palmitoyl cysteine. Cysteine 21 is lipidated: S-diacylglycerol cysteine. A Fe/B12 periplasmic-binding domain is found at 59–311; it reads KIVSLMPSNT…ELAESIYPDT (253 aa).

The protein belongs to the bacterial solute-binding protein 8 family. In terms of assembly, the complex is composed of two ATP-binding proteins (YvrA), two transmembrane proteins (YvrB) and a solute-binding protein (YvrC).

It is found in the cell membrane. Functionally, probably part of an ABC transporter complex. This is an uncharacterized protein from Bacillus subtilis (strain 168).